The primary structure comprises 585 residues: Putative lipase ATG15 (585 aa).

Residues 1-21 traverse the membrane as a helical; Signal-anchor for type II membrane protein segment; sequence MMGLDLLVSLLALSVSPCIAA. The Lumenal segment spans residues 22-585; the sequence is TRSPLQIPVL…SASPPITSPP (564 aa). N-linked (GlcNAc...) asparagine glycans are attached at residues Asn-171, Asn-193, and Asn-275. Ser-291 functions as the Charge relay system in the catalytic mechanism. N-linked (GlcNAc...) asparagine glycosylation is found at Asn-340 and Asn-437. The segment at 500-526 is disordered; that stretch reads TTTSTVPTASPAPTITPTSPPTTTAST.

The protein belongs to the AB hydrolase superfamily. Lipase family. As to quaternary structure, binds to both phosphatidylinositol (PI) and phosphatidylinositol 3,5-bisphosphate (PIP2).

The protein localises to the endosome. It localises to the multivesicular body membrane. It is found in the prevacuolar compartment membrane. It catalyses the reaction a triacylglycerol + H2O = a diacylglycerol + a fatty acid + H(+). Lipase which is essential for lysis of subvacuolar cytoplasm to vacuole targeted bodies and intravacuolar autophagic bodies. Involved in the lysis of intravacuolar multivesicular body (MVB) vesicles. The intravacuolar membrane disintegration by ATG15 is critical to life span extension. This is Putative lipase ATG15 (ATG15) from Ajellomyces capsulatus (strain NAm1 / WU24) (Darling's disease fungus).